The sequence spans 384 residues: Spermidine/putrescine import ATP-binding protein PotA (384 aa).

The ABC transporter domain maps to Ile-26 to Ile-260. Gly-62–Thr-69 contributes to the ATP binding site.

The protein belongs to the ABC transporter superfamily. Spermidine/putrescine importer (TC 3.A.1.11.1) family. As to quaternary structure, the complex is composed of two ATP-binding proteins (PotA), two transmembrane proteins (PotB and PotC) and a solute-binding protein (PotD).

It localises to the cell membrane. The catalysed reaction is ATP + H2O + polyamine-[polyamine-binding protein]Side 1 = ADP + phosphate + polyamineSide 2 + [polyamine-binding protein]Side 1.. Functionally, part of the ABC transporter complex PotABCD involved in spermidine/putrescine import. Responsible for energy coupling to the transport system. The chain is Spermidine/putrescine import ATP-binding protein PotA from Thermobifida fusca (strain YX).